A 139-amino-acid polypeptide reads, in one-letter code: Large-conductance mechanosensitive channel (139 aa).

The next 3 membrane-spanning stretches (helical) occupy residues 10-30 (FAVK…AAFG), 40-60 (VIMP…YYIA), and 80-100 (LAYG…FIIF).

This sequence belongs to the MscL family. Homopentamer.

The protein resides in the cell inner membrane. Its function is as follows. Channel that opens in response to stretch forces in the membrane lipid bilayer. May participate in the regulation of osmotic pressure changes within the cell. In Janthinobacterium sp. (strain Marseille) (Minibacterium massiliensis), this protein is Large-conductance mechanosensitive channel.